We begin with the raw amino-acid sequence, 317 residues long: Transaldolase A (317 aa).

Lysine 132 serves as the catalytic Schiff-base intermediate with substrate.

The protein belongs to the transaldolase family. Type 1 subfamily. In terms of assembly, homodimer.

It is found in the cytoplasm. The enzyme catalyses D-sedoheptulose 7-phosphate + D-glyceraldehyde 3-phosphate = D-erythrose 4-phosphate + beta-D-fructose 6-phosphate. Its pathway is carbohydrate degradation; pentose phosphate pathway; D-glyceraldehyde 3-phosphate and beta-D-fructose 6-phosphate from D-ribose 5-phosphate and D-xylulose 5-phosphate (non-oxidative stage): step 2/3. In terms of biological role, transaldolase is important for the balance of metabolites in the pentose-phosphate pathway. The protein is Transaldolase A (talA) of Pasteurella multocida (strain Pm70).